The primary structure comprises 65 residues: Large ribosomal subunit protein uL29 (65 aa).

This sequence belongs to the universal ribosomal protein uL29 family.

The polypeptide is Large ribosomal subunit protein uL29 (Acinetobacter baumannii (strain AB307-0294)).